A 547-amino-acid chain; its full sequence is Probable acetolactate synthase (547 aa).

E57 serves as a coordination point for thiamine diphosphate. FAD is bound by residues P159 and 299-318 (DRVE…LYGD). The interval 388 to 468 (DFGSYAGRMI…VVSVIGNNGI (81 aa)) is thiamine pyrophosphate binding. Mg(2+)-binding residues include D439 and N466.

This sequence belongs to the TPP enzyme family. It depends on Mg(2+) as a cofactor. Requires thiamine diphosphate as cofactor.

The catalysed reaction is 2 pyruvate + H(+) = (2S)-2-acetolactate + CO2. It participates in amino-acid biosynthesis; L-isoleucine biosynthesis; L-isoleucine from 2-oxobutanoate: step 1/4. Its pathway is amino-acid biosynthesis; L-valine biosynthesis; L-valine from pyruvate: step 1/4. This is Probable acetolactate synthase (ilvG) from Mycobacterium bovis (strain ATCC BAA-935 / AF2122/97).